The chain runs to 682 residues: 1,4-alpha-glucan-branching enzyme (682 aa).

The (1,4-alpha-D-glucosyl)n site is built by Trp88 and Lys124. Catalysis depends on Asp342, which acts as the Nucleophile. Residue Glu397 is the Proton donor of the active site.

It belongs to the glycosyl hydrolase 13 family. GlgB subfamily.

The protein resides in the cytoplasm. It carries out the reaction Transfers a segment of a (1-&gt;4)-alpha-D-glucan chain to a primary hydroxy group in a similar glucan chain.. Its pathway is glycan biosynthesis; glycogen biosynthesis. Its function is as follows. Glycogen-branching enzyme participates in the glycogen biosynthetic process along with glycogenin and glycogen synthase. Generates alpha-1,6-glucosidic branches from alpha-1,4-linked glucose chains, to increase solubility of the glycogen polymer. The protein is 1,4-alpha-glucan-branching enzyme of Cryptococcus neoformans var. grubii serotype A (strain H99 / ATCC 208821 / CBS 10515 / FGSC 9487) (Filobasidiella neoformans var. grubii).